Here is a 205-residue protein sequence, read N- to C-terminus: Putative 3-methyladenine DNA glycosylase (205 aa).

This sequence belongs to the DNA glycosylase MPG family.

In Bacillus thuringiensis (strain Al Hakam), this protein is Putative 3-methyladenine DNA glycosylase.